Reading from the N-terminus, the 825-residue chain is Cytosolic phospholipase A2 delta (825 aa).

Positions 14–133 constitute a C2 domain; the sequence is SPERLHGHPY…LPGQLLQKTF (120 aa). Ca(2+)-binding residues include D47, D53, D103, D105, and D111. In terms of domain architecture, PLA2c spans 281–825; sequence DCCPKELSVR…SETRPLGVKT (545 aa). A substrate-binding site is contributed by 339 to 340; that stretch reads GG. The active-site Nucleophile is the S370. D654 functions as the Proton acceptor in the catalytic mechanism.

Requires Ca(2+) as cofactor. As to expression, weakly or not expressed in most tissues. Detected in placenta of 17.5 dpc embryos.

It is found in the cytoplasm. Its subcellular location is the cytosol. The protein resides in the membrane. The enzyme catalyses a 1,2-diacyl-sn-glycero-3-phosphocholine + H2O = a 1-acyl-sn-glycero-3-phosphocholine + a fatty acid + H(+). The catalysed reaction is 1-hexadecanoyl-2-(5Z,8Z,11Z,14Z-eicosatetraenoyl)-sn-glycero-3-phosphocholine + H2O = 1-hexadecanoyl-sn-glycero-3-phosphocholine + (5Z,8Z,11Z,14Z)-eicosatetraenoate + H(+). It catalyses the reaction 1-hexadecanoyl-2-(9Z,12Z-octadecadienoyl)-sn-glycero-3-phosphocholine + H2O = (9Z,12Z)-octadecadienoate + 1-hexadecanoyl-sn-glycero-3-phosphocholine + H(+). It carries out the reaction 1-hexadecanoyl-2-(9Z-octadecenoyl)-sn-glycero-3-phosphocholine + H2O = 1-hexadecanoyl-sn-glycero-3-phosphocholine + (9Z)-octadecenoate + H(+). The enzyme catalyses 1-hexadecanoyl-2-(5Z,8Z,11Z,14Z-eicosatetraenoyl)-sn-glycero-3-phosphoethanolamine + H2O = 1-hexadecanoyl-sn-glycero-3-phosphoethanolamine + (5Z,8Z,11Z,14Z)-eicosatetraenoate + H(+). The catalysed reaction is 1-hexadecanoyl-2-(9Z,12Z-octadecadienoyl)-sn-glycero-3-phosphoethanolamine + H2O = 1-hexadecanoyl-sn-glycero-3-phosphoethanolamine + (9Z,12Z)-octadecadienoate + H(+). It catalyses the reaction 1-hexadecanoyl-sn-glycero-3-phosphocholine + H2O = sn-glycerol 3-phosphocholine + hexadecanoate + H(+). It functions in the pathway lipid metabolism; fatty acid metabolism. With respect to regulation, stimulated by cytosolic Ca(2+). Calcium-dependent phospholipase A2 that selectively hydrolyzes glycerophospholipids in the sn-2 position. Compared to its human ortholog, may have no preference for the fatty acid found at the sn-2 position. In Mus musculus (Mouse), this protein is Cytosolic phospholipase A2 delta.